Here is a 359-residue protein sequence, read N- to C-terminus: Salicylate carboxymethyltransferase (359 aa).

Y18 serves as a coordination point for S-adenosyl-L-methionine. Residues Y18, 21–25, and Q25 each bind substrate; that span reads NSFIQ. S-adenosyl-L-methionine contacts are provided by residues G59, 59 to 60, 59 to 61, N65, 96 to 99, D98, 129 to 131, and 146 to 148; these read GC, GCS, LNDL, SFY, and SYS. Substrate contacts are provided by residues 147 to 151 and W151; that span reads YSLMW. Mg(2+)-binding residues include N162, D248, F250, and N251. Y255 is a binding site for substrate.

It belongs to the methyltransferase superfamily. SABATH family.

It carries out the reaction salicylate + S-adenosyl-L-methionine = methyl salicylate + S-adenosyl-L-homocysteine. Catalyzes the methylation of the free carboxyl end of the plant hormone salicylic acid (SA). Converts SA to SA methyl ester (MSA). The volatile compound MSA is hypothesized to act as an airborne signal that triggers defense responses in uninfected plants. MSA is an important chemoattractant for moth pollinated flowering plants. In Clarkia breweri (Fairy fans), this protein is Salicylate carboxymethyltransferase (SAMT).